A 384-amino-acid chain; its full sequence is ATP phosphoribosyltransferase regulatory subunit (384 aa).

It belongs to the class-II aminoacyl-tRNA synthetase family. HisZ subfamily. Heteromultimer composed of HisG and HisZ subunits.

Its subcellular location is the cytoplasm. Its pathway is amino-acid biosynthesis; L-histidine biosynthesis; L-histidine from 5-phospho-alpha-D-ribose 1-diphosphate: step 1/9. Its function is as follows. Required for the first step of histidine biosynthesis. May allow the feedback regulation of ATP phosphoribosyltransferase activity by histidine. The polypeptide is ATP phosphoribosyltransferase regulatory subunit (Azoarcus sp. (strain BH72)).